Consider the following 898-residue polypeptide: Phosphoenolpyruvate carboxylase (898 aa).

Active-site residues include His138 and Lys561.

This sequence belongs to the PEPCase type 1 family. It depends on Mg(2+) as a cofactor.

It carries out the reaction oxaloacetate + phosphate = phosphoenolpyruvate + hydrogencarbonate. Functionally, forms oxaloacetate, a four-carbon dicarboxylic acid source for the tricarboxylic acid cycle. The sequence is that of Phosphoenolpyruvate carboxylase from Streptococcus pneumoniae serotype 2 (strain D39 / NCTC 7466).